The chain runs to 603 residues: Probable GMP synthase [glutamine-hydrolyzing] (603 aa).

A Glutamine amidotransferase type-1 domain is found at 6–195; the sequence is KIAVVDFGGQ…FIQICGVSKT (190 aa). The Nucleophile role is filled by C81. Catalysis depends on residues H170 and E172. One can recognise a GMPS ATP-PPase domain in the interval 196-392; sequence WGIDQFLKEK…LGLESEWVGR (197 aa). 224–230 is an ATP binding site; it reads SGGVDST.

As to quaternary structure, homodimer.

The enzyme catalyses XMP + L-glutamine + ATP + H2O = GMP + L-glutamate + AMP + diphosphate + 2 H(+). It participates in purine metabolism; GMP biosynthesis; GMP from XMP (L-Gln route): step 1/1. Its function is as follows. Catalyzes the synthesis of GMP from XMP. The sequence is that of Probable GMP synthase [glutamine-hydrolyzing] (guaA) from Leptospira interrogans serogroup Icterohaemorrhagiae serovar copenhageni (strain Fiocruz L1-130).